The chain runs to 161 residues: S-protein homolog 2 (161 aa).

An N-terminal signal peptide occupies residues 1 to 24 (MDIPKQYLSLFILIIFITTKLSQA). Residues asparagine 75, asparagine 106, and asparagine 157 are each glycosylated (N-linked (GlcNAc...) asparagine).

It belongs to the plant self-incompatibility (S1) protein family.

Its subcellular location is the secreted. The polypeptide is S-protein homolog 2 (Arabidopsis thaliana (Mouse-ear cress)).